A 196-amino-acid polypeptide reads, in one-letter code: Peptidyl-tRNA hydrolase (196 aa).

Tyrosine 17 is a binding site for tRNA. Histidine 22 acts as the Proton acceptor in catalysis. TRNA is bound by residues phenylalanine 68, asparagine 70, and asparagine 116.

The protein belongs to the PTH family. Monomer.

The protein localises to the cytoplasm. The enzyme catalyses an N-acyl-L-alpha-aminoacyl-tRNA + H2O = an N-acyl-L-amino acid + a tRNA + H(+). Functionally, hydrolyzes ribosome-free peptidyl-tRNAs (with 1 or more amino acids incorporated), which drop off the ribosome during protein synthesis, or as a result of ribosome stalling. Catalyzes the release of premature peptidyl moieties from peptidyl-tRNA molecules trapped in stalled 50S ribosomal subunits, and thus maintains levels of free tRNAs and 50S ribosomes. This Photorhabdus laumondii subsp. laumondii (strain DSM 15139 / CIP 105565 / TT01) (Photorhabdus luminescens subsp. laumondii) protein is Peptidyl-tRNA hydrolase.